Consider the following 149-residue polypeptide: Arginine repressor (149 aa).

This sequence belongs to the ArgR family.

The protein localises to the cytoplasm. It participates in amino-acid biosynthesis; L-arginine biosynthesis [regulation]. In terms of biological role, regulates arginine biosynthesis genes. The sequence is that of Arginine repressor from Exiguobacterium sibiricum (strain DSM 17290 / CCUG 55495 / CIP 109462 / JCM 13490 / 255-15).